The following is a 116-amino-acid chain: MNKCRFLSKNEEYRNIYQNGRSIASRYFVVYYLKNEDEKKLPSFGISVSKKIGKAVVRNRLRRRLKEALKRLCFEFLPGYDYVIIPRLSFKNDEFSVILEQLLYIIKLMKRSIDNA.

The protein belongs to the RnpA family. As to quaternary structure, consists of a catalytic RNA component (M1 or rnpB) and a protein subunit.

It catalyses the reaction Endonucleolytic cleavage of RNA, removing 5'-extranucleotides from tRNA precursor.. In terms of biological role, RNaseP catalyzes the removal of the 5'-leader sequence from pre-tRNA to produce the mature 5'-terminus. It can also cleave other RNA substrates such as 4.5S RNA. The protein component plays an auxiliary but essential role in vivo by binding to the 5'-leader sequence and broadening the substrate specificity of the ribozyme. The sequence is that of Ribonuclease P protein component from Carboxydothermus hydrogenoformans (strain ATCC BAA-161 / DSM 6008 / Z-2901).